The primary structure comprises 285 residues: sn-2 palmitoyl-lipid 9-desaturase (285 aa).

A run of 2 helical transmembrane segments spans residues 20–40 (WINV…PWFF) and 44–64 (ALGL…CLGY). The Histidine box-1 motif lies at 65–70 (HRLLSH). Residues 81–101 (YAIALIGALALQGGPIFWVGG) traverse the membrane as a helical segment. Residues 102–106 (HRQHH) carry the Histidine box-2 motif. A helical membrane pass occupies residues 169 to 189 (IPFALLLYVLGGWPFVFYGVF). The Histidine box-3 motif lies at 239-243 (HHTYP).

Belongs to the fatty acid desaturase type 2 family. Fe(2+) is required as a cofactor.

The protein resides in the membrane. The enzyme catalyses a 1-acyl-2-hexadecanoyl-glycerolipid + 2 reduced [2Fe-2S]-[ferredoxin] + O2 + 2 H(+) = a 1-acyl-2-[(9Z)-hexadecenoyl]-glycerolipid + 2 oxidized [2Fe-2S]-[ferredoxin] + 2 H2O. It functions in the pathway lipid metabolism; fatty acid biosynthesis. Its function is as follows. Desaturase involved in fatty acid biosynthesis. Introduces a double bond at carbon 9 of palmitoyl groups (16:0) attached to the sn-2 position of the glycerol moiety of membrane glycerolipids. The sequence is that of sn-2 palmitoyl-lipid 9-desaturase from Nostoc sp. (strain 36).